Here is a 317-residue protein sequence, read N- to C-terminus: Ataxin-3 homolog (317 aa).

Positions 7 to 178 constitute a Josephin domain; it reads INSIFFEHQE…RSDADDLISL (172 aa). Catalysis depends on Cys-20, which acts as the Nucleophile. His-117 (proton acceptor) is an active-site residue. The active site involves Asn-132. UIM domains lie at 219–239 and 247–264; these read SQEEKDLAIAFAMSMETKDGS and EIDEENLRKAIELSQAPG. The disordered stretch occupies residues 254 to 317; it reads RKAIELSQAP…KKKEERNDEK (64 aa). Residues 276–293 are compositionally biased toward polar residues; sequence RSRSSTPPGASEPFSNAE. Over residues 294–317 the composition is skewed to basic and acidic residues; it reads QQRRDRQKFLERFEKKKEERNDEK. The tract at residues 296 to 299 is interaction with cdc-48.1 and cdc-48.2; that stretch reads RRDR.

Forms a complex composed of deubiquitinating enzyme atx-3, adapter ubxn-5 and cdc-48.1. Forms a complex composed of deubiquitinating enzyme atx-3, E4 ubiquitin-protein ligase ufd-2 and cdc-48.1. Interacts (via RRDR motif) with cdc-48.1 (via N-terminus) and cdc-48.2 (via N-terminus); the interaction with cdc-48.1 is not required for atx-3 enzymatic activity. Interacts (via C-terminus) with ubxn-5. May interact with ned-8. In terms of tissue distribution, expressed in germline (at protein level). Expressed in spermatheca, pharynx, dorsal and ventral cords, some head neurons, hypodermis, body wall muscles and coelomocytes.

The protein resides in the cytoplasm. The protein localises to the nucleus. It is found in the nucleolus. It catalyses the reaction Thiol-dependent hydrolysis of ester, thioester, amide, peptide and isopeptide bonds formed by the C-terminal Gly of ubiquitin (a 76-residue protein attached to proteins as an intracellular targeting signal).. Its function is as follows. Acts as a chain editing deubiquitinating enzyme that binds and cleaves 'Lys-48'-linked polyubiquitin chains, with a preference for chains containing four or more ubiquitin molecules thereby modulating protein degradation by the ubiquitin-proteasome pathway. Probably by regulating the IGF-1-insulin-like pathway, regulates lifespan. Regulates germline DNA double-strand-break repair and apoptosis in response to DNA damage by recruiting E4 ubiquitin-protein ligase ufd-2 to DNA repair foci. Interacts with key regulators of transcription and represses transcription. Acts as a histone-binding protein that regulates transcription. The sequence is that of Ataxin-3 homolog (atx-3) from Caenorhabditis elegans.